Consider the following 840-residue polypeptide: MVSVFRSEEMCLSQLFLQVEAAYCCVAELGELGLVQFKDLNMNVNSFQRKFVNEVRRCESLERILRFLEDEMQNEIVVQLLEKSPLTPLPREMITLETVLEKLEGELQEANQNQQALKQSFLELTELKYLLKKTQDFFETETNLADDFFTEDTSGLLELKAVPAYMTGKLGFIAGVINRERMASFERLLWRICRGNVYLKFSEMDAPLEDPVTKEEIQKNIFIIFYQGEQLRQKIKKICDGFRATVYPCPEPAVERREMLESVNVRLEDLITVITQTESHRQRLLQEAAANWHSWLIKVQKMKAVYHILNMCNIDVTQQCVIAEIWFPVADATRIKRALEQGMELSGSSMAPIMTTVQSKTAPPTFNRTNKFTAGFQNIVDAYGVGSYREINPAPYTIITFPFLFAVMFGDCGHGTVMLLAALWMILNERRLLSQKTDNEIWNTFFHGRYLILLMGIFSIYTGLIYNDCFSKSLNIFGSSWSVQPMFRNGTWNTHVMEESLYLQLDPAIPGVYFGNPYPFGIDPIWNLASNKLTFLNSYKMKMSVILGIVQMVFGVILSLFNHIYFRRTLNIILQFIPEMIFILCLFGYLVFMIIFKWCCFDVHVSQHAPSILIHFINMFLFNYSDSSNAPLYKHQQEVQSFFVVMALISVPWMLLIKPFILRASHRKSQLQASRIQEDATENIEGDSSSPSSRSGQRTSADTHGALDDHGEEFNFGDVFVHQAIHTIEYCLGCISNTASYLRLWALSLAHAQLSEVLWTMVMNSGLQTRGWGGIVGVFIIFAVFAVLTVAILLIMEGLSAFLHALRLHWVEFQNKFYVGDGYKFSPFSFKHILDGTAEE.

Residues 1–390 lie on the Cytoplasmic side of the membrane; the sequence is MVSVFRSEEM…DAYGVGSYRE (390 aa). The chain crosses the membrane as a helical span at residues 391 to 409; that stretch reads INPAPYTIITFPFLFAVMF. Topologically, residues 410–411 are vacuolar; the sequence is GD. A helical transmembrane segment spans residues 412 to 428; sequence CGHGTVMLLAALWMILN. Residues 429–443 lie on the Cytoplasmic side of the membrane; it reads ERRLLSQKTDNEIWN. The helical transmembrane segment at 444–473 threads the bilayer; it reads TFFHGRYLILLMGIFSIYTGLIYNDCFSKS. Residues 474–538 lie on the Vacuolar side of the membrane; it reads LNIFGSSWSV…ASNKLTFLNS (65 aa). The chain crosses the membrane as a helical span at residues 539-558; that stretch reads YKMKMSVILGIVQMVFGVIL. The Cytoplasmic portion of the chain corresponds to 559 to 576; it reads SLFNHIYFRRTLNIILQF. A helical membrane pass occupies residues 577-597; sequence IPEMIFILCLFGYLVFMIIFK. Over 598-642 the chain is Vacuolar; sequence WCCFDVHVSQHAPSILIHFINMFLFNYSDSSNAPLYKHQQEVQSF. A helical transmembrane segment spans residues 643–662; it reads FVVMALISVPWMLLIKPFIL. The Cytoplasmic segment spans residues 663 to 727; sequence RASHRKSQLQ…DVFVHQAIHT (65 aa). The tract at residues 675–704 is disordered; the sequence is RIQEDATENIEGDSSSPSSRSGQRTSADTH. The chain crosses the membrane as a helical span at residues 728–752; the sequence is IEYCLGCISNTASYLRLWALSLAHA. Residues 753-773 lie on the Vacuolar side of the membrane; the sequence is QLSEVLWTMVMNSGLQTRGWG. A helical membrane pass occupies residues 774–812; that stretch reads GIVGVFIIFAVFAVLTVAILLIMEGLSAFLHALRLHWVE. The Cytoplasmic portion of the chain corresponds to 813–840; that stretch reads FQNKFYVGDGYKFSPFSFKHILDGTAEE.

This sequence belongs to the V-ATPase 116 kDa subunit family. V-ATPase is a heteromultimeric enzyme made up of two complexes: the ATP-hydrolytic V1 complex and the proton translocation V0 complex. The V1 complex consists of three catalytic AB heterodimers that form a heterohexamer, three peripheral stalks each consisting of EG heterodimers, one central rotor including subunits D and F, and the regulatory subunits C and H. The proton translocation complex V0 consists of the proton transport subunit a, a ring of proteolipid subunits c9c'', rotary subunit d, subunits e and f, and the accessory subunits ATP6AP1/Ac45 and ATP6AP2/PRR. Interacts with the V1 complex V-ATPase subunit A ATP6V1A. Interacts with the V0 complex V-ATPase subunit c ATP6V0C. As to expression, expressed in adult and fetal kidney. Found in the inner ear.

Its subcellular location is the apical cell membrane. The protein resides in the basolateral cell membrane. In terms of biological role, subunit of the V0 complex of vacuolar(H+)-ATPase (V-ATPase), a multisubunit enzyme composed of a peripheral complex (V1) that hydrolyzes ATP and a membrane integral complex (V0) that translocates protons. V-ATPase is responsible for acidifying and maintaining the pH of intracellular compartments and in some cell types, is targeted to the plasma membrane, where it is responsible for acidifying the extracellular environment. Involved in normal vectorial acid transport into the urine by the kidney. The sequence is that of V-type proton ATPase 116 kDa subunit a 4 (ATP6V0A4) from Homo sapiens (Human).